The primary structure comprises 348 residues: tRNA pseudouridine synthase B (348 aa).

Residue Asp52 is the Nucleophile of the active site.

Belongs to the pseudouridine synthase TruB family. Type 1 subfamily.

The catalysed reaction is uridine(55) in tRNA = pseudouridine(55) in tRNA. Its function is as follows. Responsible for synthesis of pseudouridine from uracil-55 in the psi GC loop of transfer RNAs. The polypeptide is tRNA pseudouridine synthase B (Rhodopirellula baltica (strain DSM 10527 / NCIMB 13988 / SH1)).